Here is an 841-residue protein sequence, read N- to C-terminus: Translation initiation factor IF-2 (841 aa).

One can recognise a tr-type G domain in the interval 341-508; the sequence is NRAPVVTIMG…AILLQAEILE (168 aa). The interval 350 to 357 is G1; sequence GHVDHGKT. Residue 350–357 participates in GTP binding; the sequence is GHVDHGKT. A G2 region spans residues 375-379; that stretch reads GITQC. The G3 stretch occupies residues 396–399; the sequence is DTPG. Residues 396–400 and 450–453 each bind GTP; these read DTPGH and NKID. The segment at 450–453 is G4; that stretch reads NKID. Positions 486–488 are G5; that stretch reads SAK.

This sequence belongs to the TRAFAC class translation factor GTPase superfamily. Classic translation factor GTPase family. IF-2 subfamily.

It localises to the cytoplasm. In terms of biological role, one of the essential components for the initiation of protein synthesis. Protects formylmethionyl-tRNA from spontaneous hydrolysis and promotes its binding to the 30S ribosomal subunits. Also involved in the hydrolysis of GTP during the formation of the 70S ribosomal complex. The polypeptide is Translation initiation factor IF-2 (Wigglesworthia glossinidia brevipalpis).